Reading from the N-terminus, the 249-residue chain is Sugar fermentation stimulation protein homolog (249 aa).

The protein belongs to the SfsA family.

The sequence is that of Sugar fermentation stimulation protein homolog from Synechococcus sp. (strain RCC307).